A 502-amino-acid polypeptide reads, in one-letter code: L-arabinose isomerase (502 aa).

Glu-307, Glu-334, His-351, and His-450 together coordinate Mn(2+).

Belongs to the arabinose isomerase family. Mn(2+) serves as cofactor.

It carries out the reaction beta-L-arabinopyranose = L-ribulose. The protein operates within carbohydrate degradation; L-arabinose degradation via L-ribulose; D-xylulose 5-phosphate from L-arabinose (bacterial route): step 1/3. Functionally, catalyzes the conversion of L-arabinose to L-ribulose. This Nocardioides sp. (strain ATCC BAA-499 / JS614) protein is L-arabinose isomerase.